The following is a 102-amino-acid chain: Urease subunit beta (102 aa).

The protein belongs to the urease beta subunit family. As to quaternary structure, heterotrimer of UreA (gamma), UreB (beta) and UreC (alpha) subunits. Three heterotrimers associate to form the active enzyme.

It localises to the cytoplasm. It catalyses the reaction urea + 2 H2O + H(+) = hydrogencarbonate + 2 NH4(+). It functions in the pathway nitrogen metabolism; urea degradation; CO(2) and NH(3) from urea (urease route): step 1/1. The protein is Urease subunit beta of Acinetobacter baylyi (strain ATCC 33305 / BD413 / ADP1).